Reading from the N-terminus, the 504-residue chain is Probable alpha-L-arabinofuranosidase C (504 aa).

3 N-linked (GlcNAc...) asparagine glycosylation sites follow: asparagine 152, asparagine 181, and asparagine 269.

The protein belongs to the glycosyl hydrolase 51 family.

Its subcellular location is the secreted. The enzyme catalyses Hydrolysis of terminal non-reducing alpha-L-arabinofuranoside residues in alpha-L-arabinosides.. The protein operates within glycan metabolism; L-arabinan degradation. In terms of biological role, alpha-L-arabinofuranosidase involved in the degradation of arabinoxylan, a major component of plant hemicellulose. Acts only on small linear 1,5-alpha-linked L-arabinofuranosyl oligosaccharides. The polypeptide is Probable alpha-L-arabinofuranosidase C (abfC) (Aspergillus flavus (strain ATCC 200026 / FGSC A1120 / IAM 13836 / NRRL 3357 / JCM 12722 / SRRC 167)).